The primary structure comprises 1449 residues: MSNEFVKQINRSIKSDDNLNDLEFEITKFQLLKKSNTLRTIIKSKDQLSEEQKKIIKQYIKKAIGFEINIEIMYYIDISDITLKQVVDQHWNHVCEKIIEKHPVLKEVLLNSPIVIEGEKIIIKNGSEFLCTFVNKKHIDREIKGYIKSFFGINSLVEVKYDESLANKNYNDEKLNENKEIAKKVIETMKAQAAQEKPVKKESSDNKHKSNGGNKGGYEKKSYKDEPKNENTILGRNIQGDTIDISSIDMGSGIVTISGDVFKTDIFETKTGRIILTFFITDYTSSIAVKCFLRDKDKEHVLENVKKGLYCKVRGEATMDPYAKEVVIMARDINKLTKIERMDTAEEKRVELHMHTTMSSMDAVTAASKIVERAAKFGHKAVAITDHGVVQAFPDAQIAAKKNNIKVIYGVEGYLADNGTPIVINGHEESFDDEYVVFDIETTGFSSKNDKIIEIGAVKLKDGEIVDSFSTFVDPKVNIPYKITELTSITQNMVNGQPTIDEVLPKFMEFVGNSVLVAHNAAFDVGFIKKNLMDMGKTLKNPVMDTVPLARYLYPDLKKVKLNLVAKHLGISLENHHRAVDDAKATAEILKFSFKKMKEEMDIHDVKTLNEKYLSNIDVKKLPLHHIIILAKNQTGIKNLYKLVSMAHLDYFARRPRLPKSIITEYREGLIIGSACEAGQLYKAVLEGKTDGELKEIASFYDYLEIQPIQNNEFLIRKGNVKDEEELRELNRKIYDLGKEMDKPVVATCDCHFLDPNDEVFRRIIMAGQGYGDADNQPPLYFRTTNEMMKEFEYLGEEACREVVIENTQKIADMVEAVKPIPDETFPPKIEGAEEEIRNMTMNKVHSIYGENLPEVVQKRLDKELNSIINNGYAVLYLIAQKLVAKSLEDGYLVGSRGSVGSSFVATMSDITEVNGLPPHYVCPNCKKSEFFLDGSISSGADLPDKNCPDCGAKYIKDGHDIPFETFLGFEGDKEPDIDLNFSGEYQAVVHKYTEVLFGKGYVFKAGTIGTVAEKTAYGFVKKYLQERGLVVSQAEIERLTIGCTGIKRTSGQHPGGIMVVPNDNEIYNFCPIQHPADDVNTDIITTHFDYHSISGRLLKLDILGHDDPTVLRMLQDLTGLDPKTIPLNDPKVISLFTSPDALGVTKEELGCEVGSYGLPEFGTKFVRQMLVDTQPKSFADLVRISGLSHGTDVWLNNAQYFIKEGYTTLKDCIATRDDIMVYLMYKDLPPKTAFTIMEKVRKGKGLSEEDEALMREKNVPDWYIESCKRIKYMFPKGHAVAYVMMAVRIAYYKVYYPEAYYTTYFTVRADDFDADLICKGEEAIKAKMEELNSLGNNISVKEKGLLTILEISYEMYKRGLNFLKVDLYKSEATKFKIEEDGIRPPLNALQGVGDNAAKSIVECRVNGEFISKEDLRLRSKVSKTVIETLDNHGCLEGMQESNQLSLFG.

The disordered stretch occupies residues 194–231; the sequence is AQEKPVKKESSDNKHKSNGGNKGGYEKKSYKDEPKNEN. 2 stretches are compositionally biased toward basic and acidic residues: residues 197–208 and 217–229; these read KPVKKESSDNKH and GYEK…EPKN. Residues 435 to 590 form the Exonuclease domain; that stretch reads YVVFDIETTG…DDAKATAEIL (156 aa).

It belongs to the DNA polymerase type-C family. PolC subfamily.

The protein resides in the cytoplasm. It catalyses the reaction DNA(n) + a 2'-deoxyribonucleoside 5'-triphosphate = DNA(n+1) + diphosphate. Required for replicative DNA synthesis. This DNA polymerase also exhibits 3' to 5' exonuclease activity. The chain is DNA polymerase III PolC-type from Clostridium perfringens (strain 13 / Type A).